The primary structure comprises 194 residues: Fe/S biogenesis protein NfuA (194 aa).

2 residues coordinate [4Fe-4S] cluster: Cys-151 and Cys-154.

It belongs to the NfuA family. Homodimer. [4Fe-4S] cluster serves as cofactor.

Functionally, involved in iron-sulfur cluster biogenesis. Binds a 4Fe-4S cluster, can transfer this cluster to apoproteins, and thereby intervenes in the maturation of Fe/S proteins. Could also act as a scaffold/chaperone for damaged Fe/S proteins. This is Fe/S biogenesis protein NfuA from Photobacterium profundum (strain SS9).